The sequence spans 715 residues: ATP-dependent DNA helicase Hel308 (715 aa).

A Q motif motif is present at residues 1–29 (MKVEELRIDERIKEVLKKRGISELYPPQA). ATP is bound by residues glutamine 28 and 46–53 (IPTASGKT). The Helicase ATP-binding domain maps to 33–197 (TSGILKGENA…WLNAKLIKSD (165 aa)). The DEAH box motif lies at 145 to 148 (DEIH). One can recognise a Helicase C-terminal domain in the interval 229–422 (LVYDAIKRSK…ILRGQILALI (194 aa)).

The protein belongs to the helicase family. Hel308 subfamily. In terms of assembly, monomer.

It catalyses the reaction Couples ATP hydrolysis with the unwinding of duplex DNA by translocating in the 3'-5' direction.. The catalysed reaction is ATP + H2O = ADP + phosphate + H(+). In terms of biological role, DNA-dependent ATPase and 3'-5' DNA helicase that may be involved in repair of stalled replication forks. The protein is ATP-dependent DNA helicase Hel308 of Pyrococcus horikoshii (strain ATCC 700860 / DSM 12428 / JCM 9974 / NBRC 100139 / OT-3).